Reading from the N-terminus, the 154-residue chain is Flagellar assembly factor FliW (154 aa).

It belongs to the FliW family. Interacts with translational regulator CsrA and flagellin(s).

It is found in the cytoplasm. Its function is as follows. Acts as an anti-CsrA protein, binds CsrA and prevents it from repressing translation of its target genes, one of which is flagellin. Binds to flagellin and participates in the assembly of the flagellum. The chain is Flagellar assembly factor FliW from Carboxydothermus hydrogenoformans (strain ATCC BAA-161 / DSM 6008 / Z-2901).